The following is a 469-amino-acid chain: ATP-dependent protease ATPase subunit HslU (469 aa).

ATP contacts are provided by residues Ile24, 66–71, Asp282, Glu347, and Arg419; that span reads GVGKTE.

The protein belongs to the ClpX chaperone family. HslU subfamily. In terms of assembly, a double ring-shaped homohexamer of HslV is capped on each side by a ring-shaped HslU homohexamer. The assembly of the HslU/HslV complex is dependent on binding of ATP.

The protein resides in the cytoplasm. ATPase subunit of a proteasome-like degradation complex; this subunit has chaperone activity. The binding of ATP and its subsequent hydrolysis by HslU are essential for unfolding of protein substrates subsequently hydrolyzed by HslV. HslU recognizes the N-terminal part of its protein substrates and unfolds these before they are guided to HslV for hydrolysis. The sequence is that of ATP-dependent protease ATPase subunit HslU from Listeria monocytogenes serotype 4b (strain CLIP80459).